The chain runs to 148 residues: UPF0756 membrane protein YeaL (148 aa).

Helical transmembrane passes span 14–34 (ALGFISHNTTVAVSILVLIIV), 51–71 (LSIGIIILTIGVMAPIASGTL), 86–106 (LVAIAVGVIVYWLGGRGVTLM), and 121–141 (VLGVALFRGVPVGPLIAAGLV).

This sequence belongs to the UPF0756 family.

Its subcellular location is the cell membrane. The protein is UPF0756 membrane protein YeaL of Shigella dysenteriae serotype 1 (strain Sd197).